Consider the following 88-residue polypeptide: ATP synthase F(0) complex subunit f, mitochondrial (88 aa).

An N-acetylalanine modification is found at Ala2. Position 3 is a phosphoserine (Ser3). Residue Lys16 is modified to N6-acetyllysine. A helical membrane pass occupies residues 62 to 79 (MVLAAYVVFSYCISYKEL).

It belongs to the ATPase F chain family. Component of the ATP synthase complex composed at least of ATP5F1A/subunit alpha, ATP5F1B/subunit beta, ATP5MC1/subunit c (homooctomer), MT-ATP6/subunit a, MT-ATP8/subunit 8, ATP5ME/subunit e, ATP5MF/subunit f, ATP5MG/subunit g, ATP5MK/subunit k, ATP5MJ/subunit j, ATP5F1C/subunit gamma, ATP5F1D/subunit delta, ATP5F1E/subunit epsilon, ATP5PF/subunit F6, ATP5PB/subunit b, ATP5PD/subunit d, ATP5PO/subunit OSCP. ATP synthase complex consists of a soluble F(1) head domain (subunits alpha(3) and beta(3)) - the catalytic core - and a membrane F(0) domain - the membrane proton channel (subunits c, a, 8, e, f, g, k and j). These two domains are linked by a central stalk (subunits gamma, delta, and epsilon) rotating inside the F1 region and a stationary peripheral stalk (subunits F6, b, d, and OSCP).

It is found in the mitochondrion. The protein localises to the mitochondrion inner membrane. Its function is as follows. Subunit f, of the mitochondrial membrane ATP synthase complex (F(1)F(0) ATP synthase or Complex V) that produces ATP from ADP in the presence of a proton gradient across the membrane which is generated by electron transport complexes of the respiratory chain. ATP synthase complex consist of a soluble F(1) head domain - the catalytic core - and a membrane F(1) domain - the membrane proton channel. These two domains are linked by a central stalk rotating inside the F(1) region and a stationary peripheral stalk. During catalysis, ATP synthesis in the catalytic domain of F(1) is coupled via a rotary mechanism of the central stalk subunits to proton translocation. In vivo, can only synthesize ATP although its ATP hydrolase activity can be activated artificially in vitro. Part of the complex F(0) domain. The protein is ATP synthase F(0) complex subunit f, mitochondrial of Mus musculus (Mouse).